Here is a 170-residue protein sequence, read N- to C-terminus: Acireductone dioxygenase (170 aa).

Fe(2+) is bound by residues His-99, His-101, Glu-105, and His-144. Residues His-99, His-101, Glu-105, and His-144 each coordinate Ni(2+).

It belongs to the acireductone dioxygenase (ARD) family. As to quaternary structure, monomer. The cofactor is Fe(2+). It depends on Ni(2+) as a cofactor.

The enzyme catalyses 1,2-dihydroxy-5-(methylsulfanyl)pent-1-en-3-one + O2 = 3-(methylsulfanyl)propanoate + CO + formate + 2 H(+). It catalyses the reaction 1,2-dihydroxy-5-(methylsulfanyl)pent-1-en-3-one + O2 = 4-methylsulfanyl-2-oxobutanoate + formate + 2 H(+). It participates in amino-acid biosynthesis; L-methionine biosynthesis via salvage pathway; L-methionine from S-methyl-5-thio-alpha-D-ribose 1-phosphate: step 5/6. Functionally, catalyzes 2 different reactions between oxygen and the acireductone 1,2-dihydroxy-3-keto-5-methylthiopentene (DHK-MTPene) depending upon the metal bound in the active site. Fe-containing acireductone dioxygenase (Fe-ARD) produces formate and 2-keto-4-methylthiobutyrate (KMTB), the alpha-ketoacid precursor of methionine in the methionine recycle pathway. Ni-containing acireductone dioxygenase (Ni-ARD) produces methylthiopropionate, carbon monoxide and formate, and does not lie on the methionine recycle pathway. This is Acireductone dioxygenase from Bacillus cereus (strain ATCC 14579 / DSM 31 / CCUG 7414 / JCM 2152 / NBRC 15305 / NCIMB 9373 / NCTC 2599 / NRRL B-3711).